The following is a 402-amino-acid chain: Multidrug resistance protein MdtH (402 aa).

Residues 1–12 lie on the Cytoplasmic side of the membrane; sequence MSRVSQARNLGK. A helical membrane pass occupies residues 13-33; the sequence is YFLLIDNMLVVLGFFVVFPLI. Over 34-98 the chain is Periplasmic; the sequence is SIRFVDQMGW…GFATMGIAHE (65 aa). The helical transmembrane segment at 99–116 threads the bilayer; the sequence is PWLLWFSCLLSGLGGTLF. At 117–138 the chain is on the cytoplasmic side; that stretch reads DPPRSALVVKLIRPQQRGRFFS. A helical membrane pass occupies residues 139 to 159; it reads LLMMQDSAGAVIGALLGSWLL. The Periplasmic portion of the chain corresponds to 160-164; the sequence is QYDFR. Residues 165–185 form a helical membrane-spanning segment; it reads LVCATGAVLFVLCAAFNAWLL. Over 186–213 the chain is Cytoplasmic; it reads PAWKLSTVRTPVREGMTRVMRDKRFVTY. A helical transmembrane segment spans residues 214–234; sequence VLTLAGYYMLAVQVMLMLPIM. The Periplasmic segment spans residues 235 to 243; that stretch reads VNDVAGAPS. A helical membrane pass occupies residues 244-264; sequence AVKWMYAIEACLSLTLLYPIA. Topologically, residues 265-276 are cytoplasmic; that stretch reads RWSEKHFRLEHR. The chain crosses the membrane as a helical span at residues 277–297; the sequence is LMAGLLIMSLSMMPVGMVSGL. Residues 298-299 are Periplasmic-facing; it reads QQ. Residues 300 to 320 traverse the membrane as a helical segment; that stretch reads LFTLICLFYIGSIIAEPARET. Topologically, residues 321–339 are cytoplasmic; sequence LSASLADARARGSYMGFSR. Residues 340 to 360 traverse the membrane as a helical segment; it reads LGLAIGGAIGYIGGGWLFDLG. Over 361–367 the chain is Periplasmic; the sequence is KSAHQPE. A helical membrane pass occupies residues 368-388; the sequence is LPWMMLGIIGIFTFLALGWQF. Topologically, residues 389–402 are cytoplasmic; that stretch reads SQKRTARRLLERDA.

This sequence belongs to the major facilitator superfamily. DHA1 family. MdtH (TC 2.A.1.2.21) subfamily.

The protein localises to the cell inner membrane. Its function is as follows. Confers resistance to norfloxacin and enoxacin. The sequence is that of Multidrug resistance protein MdtH from Escherichia coli O7:K1 (strain IAI39 / ExPEC).